A 149-amino-acid polypeptide reads, in one-letter code: Deoxyuridine 5'-triphosphate nucleotidohydrolase (149 aa).

Residues 68-70, Asn-81, and 85-87 contribute to the substrate site; these read RSG and LID.

It belongs to the dUTPase family. Mg(2+) serves as cofactor.

It carries out the reaction dUTP + H2O = dUMP + diphosphate + H(+). Its pathway is pyrimidine metabolism; dUMP biosynthesis; dUMP from dCTP (dUTP route): step 2/2. Its function is as follows. This enzyme is involved in nucleotide metabolism: it produces dUMP, the immediate precursor of thymidine nucleotides and it decreases the intracellular concentration of dUTP so that uracil cannot be incorporated into DNA. This is Deoxyuridine 5'-triphosphate nucleotidohydrolase from Azoarcus sp. (strain BH72).